The sequence spans 486 residues: Carboxypeptidase Y homolog ARB_07161 (486 aa).

The N-terminal stretch at 1 to 17 (MKGLLSLLLVGAANALA) is a signal peptide. N-linked (GlcNAc...) asparagine glycosylation is present at N111. Residue S241 is part of the active site. 3 disulfide bridges follow: C281–C305, C288–C298, and C327–C334. D403 is an active-site residue. C406 is a substrate binding site. N430 carries N-linked (GlcNAc...) asparagine glycosylation. The active site involves H462.

Belongs to the peptidase S10 family.

The protein localises to the secreted. The enzyme catalyses Release of a C-terminal amino acid with broad specificity.. Involved in degradation of small peptides. The protein is Carboxypeptidase Y homolog ARB_07161 of Arthroderma benhamiae (strain ATCC MYA-4681 / CBS 112371) (Trichophyton mentagrophytes).